A 163-amino-acid polypeptide reads, in one-letter code: Large ribosomal subunit protein uL10 (163 aa).

It belongs to the universal ribosomal protein uL10 family. Part of the ribosomal stalk of the 50S ribosomal subunit. The N-terminus interacts with L11 and the large rRNA to form the base of the stalk. The C-terminus forms an elongated spine to which L12 dimers bind in a sequential fashion forming a multimeric L10(L12)X complex.

Functionally, forms part of the ribosomal stalk, playing a central role in the interaction of the ribosome with GTP-bound translation factors. The protein is Large ribosomal subunit protein uL10 of Haemophilus ducreyi (strain 35000HP / ATCC 700724).